The sequence spans 296 residues: 4-diphosphocytidyl-2-C-methyl-D-erythritol kinase (296 aa).

The active site involves Lys13. 98 to 108 (PVAAGIGGGSA) provides a ligand contact to ATP. Asp140 is an active-site residue.

This sequence belongs to the GHMP kinase family. IspE subfamily.

It carries out the reaction 4-CDP-2-C-methyl-D-erythritol + ATP = 4-CDP-2-C-methyl-D-erythritol 2-phosphate + ADP + H(+). It functions in the pathway isoprenoid biosynthesis; isopentenyl diphosphate biosynthesis via DXP pathway; isopentenyl diphosphate from 1-deoxy-D-xylulose 5-phosphate: step 3/6. Functionally, catalyzes the phosphorylation of the position 2 hydroxy group of 4-diphosphocytidyl-2C-methyl-D-erythritol. This is 4-diphosphocytidyl-2-C-methyl-D-erythritol kinase from Rhodopseudomonas palustris (strain HaA2).